The sequence spans 528 residues: Tyrosine--tRNA ligase, cytoplasmic (528 aa).

Met-1 is modified (N-acetylmethionine). Gly-2 bears the N-acetylglycine; in Tyrosine--tRNA ligase, cytoplasmic, N-terminally processed mark. Tyr-39 lines the L-tyrosine pocket. Tyr-39 contacts trans-resveratrol. Positions 44-52 (TTGKPHVAY) match the 'HIGH' region motif. L-tyrosine is bound by residues Tyr-166, Gln-170, Asp-173, and Gln-188. 2 residues coordinate trans-resveratrol: Gln-170 and Asp-173. Lys-197 carries the post-translational modification N6-acetyllysine. Position 205 is a phosphoserine (Ser-205). Lys-206 carries the post-translational modification N6-acetyllysine. The short motif at 222–226 (KMSSS) is the 'KMSKS' region element. The Nuclear localization signal signature appears at 242 to 247 (KKKLKK). The segment at 339 to 363 (AAYPDPSKQKPMAKGPAKNSEPEEV) is disordered. Positions 364 to 468 (IPSRLDIRVG…AGSAPGEHVF (105 aa)) constitute a tRNA-binding domain. At Ser-386 the chain carries Phosphoserine. N6-acetyllysine is present on residues Lys-474, Lys-482, and Lys-490.

Belongs to the class-I aminoacyl-tRNA synthetase family. In terms of assembly, homodimer. Interacts (when binding to resveratrol) with PARP1; interaction stimulates the poly-ADP-ribosyltransferase activity of PARP1.

The protein resides in the cytoplasm. It localises to the nucleus. The catalysed reaction is tRNA(Tyr) + L-tyrosine + ATP = L-tyrosyl-tRNA(Tyr) + AMP + diphosphate + H(+). Its activity is regulated as follows. Resveratrol strongly inhibits the tyrosine--tRNA ligase activity. Its function is as follows. Tyrosine--tRNA ligase that catalyzes the attachment of tyrosine to tRNA(Tyr) in a two-step reaction: tyrosine is first activated by ATP to form Tyr-AMP and then transferred to the acceptor end of tRNA(Tyr). Also acts as a positive regulator of poly-ADP-ribosylation in the nucleus, independently of its tyrosine--tRNA ligase activity. Activity is switched upon resveratrol-binding: resveratrol strongly inhibits the tyrosine--tRNA ligase activity and promotes relocalization to the nucleus, where YARS1 specifically stimulates the poly-ADP-ribosyltransferase activity of PARP1. This chain is Tyrosine--tRNA ligase, cytoplasmic, found in Homo sapiens (Human).